A 255-amino-acid chain; its full sequence is 5-oxoprolinase subunit A 1 (255 aa).

Belongs to the LamB/PxpA family. As to quaternary structure, forms a complex composed of PxpA, PxpB and PxpC.

It catalyses the reaction 5-oxo-L-proline + ATP + 2 H2O = L-glutamate + ADP + phosphate + H(+). Functionally, catalyzes the cleavage of 5-oxoproline to form L-glutamate coupled to the hydrolysis of ATP to ADP and inorganic phosphate. This Bradyrhizobium diazoefficiens (strain JCM 10833 / BCRC 13528 / IAM 13628 / NBRC 14792 / USDA 110) protein is 5-oxoprolinase subunit A 1.